A 411-amino-acid chain; its full sequence is Proteasome-activating nucleotidase 2 (411 aa).

The stretch at 35 to 75 (IVAVNGELQAQLDDVEARREELREEVNRLQRENETLKTASL) forms a coiled coil. ATP-binding positions include 196 to 201 (GTGKTM) and His335. Positions 408 to 411 (SYIQ) are docks into pockets in the proteasome alpha-ring to cause gate opening.

Belongs to the AAA ATPase family. In terms of assembly, homohexamer. The hexameric complex has a two-ring architecture resembling a top hat that caps the 20S proteasome core at one or both ends. Upon ATP-binding, the C-terminus of PAN interacts with the alpha-rings of the proteasome core by binding to the intersubunit pockets.

The protein localises to the cytoplasm. Its function is as follows. ATPase which is responsible for recognizing, binding, unfolding and translocation of substrate proteins into the archaeal 20S proteasome core particle. Is essential for opening the gate of the 20S proteasome via an interaction with its C-terminus, thereby allowing substrate entry and access to the site of proteolysis. Thus, the C-termini of the proteasomal ATPase function like a 'key in a lock' to induce gate opening and therefore regulate proteolysis. Unfolding activity requires energy from ATP hydrolysis, whereas ATP binding alone promotes ATPase-20S proteasome association which triggers gate opening, and supports translocation of unfolded substrates. This is Proteasome-activating nucleotidase 2 from Halobacterium salinarum (strain ATCC 700922 / JCM 11081 / NRC-1) (Halobacterium halobium).